Reading from the N-terminus, the 208-residue chain is Large ribosomal subunit protein uL3 (208 aa).

A disordered region spans residues 116 to 148 (GFQGVIKRHGQSRGPMAHGSRYHRRPGSMGPVA).

It belongs to the universal ribosomal protein uL3 family. As to quaternary structure, part of the 50S ribosomal subunit. Forms a cluster with proteins L14 and L19.

In terms of biological role, one of the primary rRNA binding proteins, it binds directly near the 3'-end of the 23S rRNA, where it nucleates assembly of the 50S subunit. This chain is Large ribosomal subunit protein uL3, found in Streptococcus pyogenes serotype M12 (strain MGAS2096).